A 280-amino-acid chain; its full sequence is Cell division control protein 2 homolog B (280 aa).

Residues 1–5 (AYGVV) and K20 contribute to the ATP site. The Protein kinase domain maps to 1 to 274 (AYGVVYKARD…AKKALEHEYF (274 aa)). Y2 is modified (phosphotyrosine). The active-site Proton acceptor is D114. Phosphothreonine; by CAK is present on T148.

Belongs to the protein kinase superfamily. CMGC Ser/Thr protein kinase family. CDC2/CDKX subfamily.

It carries out the reaction L-seryl-[protein] + ATP = O-phospho-L-seryl-[protein] + ADP + H(+). The enzyme catalyses L-threonyl-[protein] + ATP = O-phospho-L-threonyl-[protein] + ADP + H(+). It catalyses the reaction [DNA-directed RNA polymerase] + ATP = phospho-[DNA-directed RNA polymerase] + ADP + H(+). With respect to regulation, phosphorylation at Tyr-2 inactivates the enzyme, while phosphorylation at Thr-148 activates it. Plays a key role in the control of the eukaryotic cell cycle. The sequence is that of Cell division control protein 2 homolog B (CDC2B) from Antirrhinum majus (Garden snapdragon).